The primary structure comprises 367 residues: TATA-box-binding protein-like (367 aa).

The tract at residues 1–26 (MKKQSKTHKVDYKYYNSGSKTSRNRN) is disordered. Over residues 16-26 (NSGSKTSRNRN) the composition is skewed to polar residues.

This sequence belongs to the TBP family.

In Acanthamoeba polyphaga (Amoeba), this protein is TATA-box-binding protein-like.